Reading from the N-terminus, the 305-residue chain is Glycine betaine-binding protein YehZ (305 aa).

A signal peptide spans 1 to 23 (MPLLKLWAGSLVMLAAVSLPLQA).

The protein belongs to the OsmX family. The complex is composed of two ATP-binding proteins (YehX), two transmembrane proteins (YehW and YehY) and a solute-binding protein (YehZ).

The protein localises to the periplasm. In terms of biological role, part of an ABC transporter complex involved in low-affinity glycine betaine uptake. Binds glycine betaine with low affinity. This Escherichia coli (strain K12) protein is Glycine betaine-binding protein YehZ (yehZ).